The chain runs to 1704 residues: MSSVSEVNVDIKDFLMSINLEQYLLHFHESGFTTVKDCAAINDSLLQKIGISPTGHRRRILKQLQIILSKMQDIPIYANVHKTKKNDDPSKDYHVPSSDQNICIELSNSGSVQTSSPPQLETVRKNLEDSDASVERSQYPQSDDKLSPPKRDFPTAEEPHLNLGSLNDSLFGSDNIKIESLITKKTVDHTVEEQQTEKVKLITENLSKLPNADSECLSFVGCSTSGTNSGNGTNGLLEGSPPSPFFKFQGEMIVNDLYVPSSPILAPVRSRSKLVSRPSRSFLLRHRPVPEIPGSTKGVSGSYFRERRNVATSTEKSVAWQNSNEENSSSIFPYGETFLFQRLENSKKRSIKNEFLTQGEALKGEAATATNSFIIKSSIYDNRKEKISEDKVEDIWIPREDKNNFLIDTASESEYSTVEECFQSLRRKNSKASKSRTQKALILDSVNRHSYPLSSTSGNADSSAVSSQAISPYACFYGASAKKVKSGWLDKLSPQGKRMFQKRWVKFDGLSISYYNNEKEMYSKGIIPLSAISTVRVQGDNKFEVVTTQRTFVFRVEKEEERNDWISILLNALKSQSLTSQSQAVVTPEKCGYLELRGYKAKIFTVLSGNSVWLCKNEQDFKSGLGITIIPMNVANVKQVDRTVKQSFEIITPYRSFSFTAETEKEKQDWIEAVQQSIAETLSDYEVAEKIWFNESNRSCADCKAPDPDWASINLCVVICKKCAGQHRSLGPKDSKVRSLKMDASIWSNELIELFIVIGNKRANDFWAGNLQKDEELHMDSPVEKRKNFITQKYKEGKFRKTLLASLTKEELNKALCAAVVKPDVLETMALLFSGADVMCATGDPVHSTPYLLAKKAGQSLQMEFLYHNKFSDFPQHDIHSEGVLSQESSQSTFLCDFLYQAPSAASKLSSEKKLLEETNKKWCVLEGGFLSYYENDKSTTPNGTININEVICLAIHKEDFYLNTGPIFIFEIYLPSERVFLFGAETSQAQRKWTEAIAKHFVPLFAENLTEADYDLIGQLFYKDCHALDQWRKGWFAMDKSSLHFCLQMQEVQGDRMHLRRLQELTISTMVQNGEKLDVLLLVEKGRTLYIHGHTKLDFTVWHTAIEKAAGTDGNALQDQQLSKNDVPIIVNSCIAFVTQYGLGCKYIYQKNGDPLHISELLESFKKDARSFKLRAGKHQLEDVTAVLKSFLSDIDDALLTKELYPYWISALDTQDDKERIKKYGAFIRSLPGVNRATLAAIIEHLYRVQKCSEINHMNAHNLALVFSSCLFQTKGQTSEEVNVIEDLINNYVEIFEVKEDQVKQMDIENSFITKWKDTQVSQAGDLLIEVYVERKEPDCSIIIRISPVMEAEELTNDILAIKNIIPTKGDIWATFEVIENEELERPLHYKENVLEQVLRWSSLAEPGSAYLVVKRFLTADTIKHCSDRSTLGSIKEGILKIKEEPSKILSGNKFQDRYFVLRDGFLFLYKDVKSSKHDKMFSLSSMKFYRGVKKKMKPPTSWGLTAYSEKHHWHLCCDSSRTQTEWMTSIFIAQHEYDIWPPAGKERKRSITKNPKIGGLPLIPIQHEGNATLARKNIESARAELERLRLSEKCDKESVDSSLKERASMVAHCLEHKDDKLRNRPRKHRSFNCLEDTEPEAPLGQPKGHKGLKTLRKTEDRNSKATLDSDHKLPSRVIEELNVVLQRSRTLPKELQDEQILK.

Positions 6–70 constitute an SAM domain; that stretch reads EVNVDIKDFL…LKQLQIILSK (65 aa). The residue at position 77 (Tyr77) is a Phosphotyrosine. A disordered region spans residues 126–161; sequence NLEDSDASVERSQYPQSDDKLSPPKRDFPTAEEPHL. Basic and acidic residues predominate over residues 142–160; the sequence is SDDKLSPPKRDFPTAEEPH. 2 consecutive PH domains span residues 482–574 and 587–679; these read KKVK…NALK and TPEK…QSIA. Residues 676 to 811 form the Arf-GAP domain; the sequence is QSIAETLSDY…TLLASLTKEE (136 aa). The C4-type zinc finger occupies 700–723; it reads CADCKAPDPDWASINLCVVICKKC. PH domains are found at residues 878 to 1003 and 1014 to 1114; these read DIHS…KHFV and DYDL…AGTD. The Rho-GAP domain occupies 1116–1297; that stretch reads NALQDQQLSK…DLINNYVEIF (182 aa). The Ras-associating domain maps to 1326–1420; the sequence is GDLLIEVYVE…AYLVVKRFLT (95 aa). One can recognise a PH 5 domain in the interval 1434 to 1537; sequence GSIKEGILKI…WMTSIFIAQH (104 aa). A Phosphoserine modification is found at Ser1632. Residues 1636–1675 form a disordered region; that stretch reads LEDTEPEAPLGQPKGHKGLKTLRKTEDRNSKATLDSDHKL. Positions 1658–1675 are enriched in basic and acidic residues; it reads RKTEDRNSKATLDSDHKL.

In terms of tissue distribution, detected in brain, thymus, lymph node, thyroid, spinal cord, trachea, heart, skeletal muscle, spleen, kidney, liver, placenta, lung and peripheral blood leukocytes.

The protein resides in the cytoplasm. In terms of biological role, phosphatidylinositol 3,4,5-trisphosphate-dependent GTPase-activating protein that modulates actin cytoskeleton remodeling by regulating ARF and RHO family members. Is activated by phosphatidylinositol 3,4,5-trisphosphate (PtdIns(3,4,5)P3) binding. Can be activated by phosphatidylinositol 3,4-bisphosphate (PtdIns(3,4,5)P2) binding, albeit with lower efficiency. This chain is Arf-GAP with Rho-GAP domain, ANK repeat and PH domain-containing protein 2 (ARAP2), found in Homo sapiens (Human).